We begin with the raw amino-acid sequence, 396 residues long: Phosphoglycerate kinase (396 aa).

Substrate-binding positions include 21–23 (DLN), R36, 59–62 (HLGR), R113, and R146. ATP contacts are provided by residues K197, E319, and 345 to 348 (GGDT).

This sequence belongs to the phosphoglycerate kinase family. In terms of assembly, monomer.

It localises to the cytoplasm. The catalysed reaction is (2R)-3-phosphoglycerate + ATP = (2R)-3-phospho-glyceroyl phosphate + ADP. The protein operates within carbohydrate degradation; glycolysis; pyruvate from D-glyceraldehyde 3-phosphate: step 2/5. This Legionella pneumophila (strain Paris) protein is Phosphoglycerate kinase.